A 237-amino-acid polypeptide reads, in one-letter code: Ras-related protein Rab-23 (237 aa).

Val20, Gly21, Lys22, Ser23, Ser24, Tyr38, and Thr41 together coordinate GTP. Ser23 contacts Mg(2+). The Switch 1 motif lies at 28 to 46 (RYCKGIFTKDYKKTIGVDF). Mg(2+) is bound by residues Thr41 and Asp64. Positions 65–84 (TAGQEEFDAITKAYYRGAQA) match the Switch 2 motif. 7 residues coordinate GTP: Gly67, Asn121, Lys122, Asp124, Ser151, Val152, and Lys153. Phosphoserine occurs at positions 186 and 187. Residues 188-208 (SNKIGVFNTSGGSHSGQNSGT) show a composition bias toward polar residues. The disordered stretch occupies residues 188-237 (SNKIGVFNTSGGSHSGQNSGTLNGGDVINLRPNKQRTKKNRNPFSSCSIP). Cys234 is modified (cysteine methyl ester). Cys234 is lipidated: S-geranylgeranyl cysteine. Residues 235–237 (SIP) constitute a propeptide, removed in mature form.

Belongs to the small GTPase superfamily. Rab family. As to quaternary structure, interacts with SUFU. Mg(2+) serves as cofactor.

It is found in the cell membrane. The protein resides in the cytoplasm. The protein localises to the cytoplasmic vesicle. Its subcellular location is the autophagosome. It localises to the endosome membrane. It is found in the phagosome. The protein resides in the phagosome membrane. It carries out the reaction GTP + H2O = GDP + phosphate + H(+). Regulated by guanine nucleotide exchange factors (GEFs) which promote the exchange of bound GDP for free GTP. Regulated by GTPase activating proteins (GAPs) which increase the GTP hydrolysis activity. Inhibited by GDP dissociation inhibitors (GDIs). Functionally, the small GTPases Rab are key regulators of intracellular membrane trafficking, from the formation of transport vesicles to their fusion with membranes. Rabs cycle between an inactive GDP-bound form and an active GTP-bound form that is able to recruit to membranes different set of downstream effectors directly responsible for vesicle formation, movement, tethering and fusion. Together with SUFU, prevents nuclear import of GLI1, and thereby inhibits GLI1 transcription factor activity. Regulates GLI1 in differentiating chondrocytes. Likewise, regulates GLI3 proteolytic processing and modulates GLI2 and GLI3 transcription factor activity. Plays a role in autophagic vacuole assembly, and mediates defense against pathogens, such as S.aureus, by promoting their capture by autophagosomes that then merge with lysosomes. This Homo sapiens (Human) protein is Ras-related protein Rab-23.